The chain runs to 570 residues: Adenine deaminase (570 aa).

This sequence belongs to the metallo-dependent hydrolases superfamily. Adenine deaminase family. Requires Mn(2+) as cofactor.

It carries out the reaction adenine + H2O + H(+) = hypoxanthine + NH4(+). The chain is Adenine deaminase from Oleidesulfovibrio alaskensis (strain ATCC BAA-1058 / DSM 17464 / G20) (Desulfovibrio alaskensis).